A 204-amino-acid polypeptide reads, in one-letter code: Urease accessory protein UreG (204 aa).

Residue 11 to 18 (GPVGAGKH) coordinates GTP.

This sequence belongs to the SIMIBI class G3E GTPase family. UreG subfamily. As to quaternary structure, homodimer. UreD, UreF and UreG form a complex that acts as a GTP-hydrolysis-dependent molecular chaperone, activating the urease apoprotein by helping to assemble the nickel containing metallocenter of UreC. The UreE protein probably delivers the nickel.

The protein localises to the cytoplasm. Its function is as follows. Facilitates the functional incorporation of the urease nickel metallocenter. This process requires GTP hydrolysis, probably effectuated by UreG. In Staphylococcus xylosus, this protein is Urease accessory protein UreG.